A 141-amino-acid polypeptide reads, in one-letter code: Putative nickel-responsive regulator (141 aa).

Residues His80, His91, His93, and Cys99 each contribute to the Ni(2+) site.

This sequence belongs to the transcriptional regulatory CopG/NikR family. As to quaternary structure, homotetramer. The cofactor is Ni(2+).

Transcriptional regulator. The sequence is that of Putative nickel-responsive regulator from Methanocaldococcus jannaschii (strain ATCC 43067 / DSM 2661 / JAL-1 / JCM 10045 / NBRC 100440) (Methanococcus jannaschii).